The chain runs to 363 residues: Protein MAK32 (363 aa).

This sequence to S.pombe SpAC4G8.14c.

Functionally, necessary for the structural stability of L-A double-stranded RNA-containing particles. Necessary for growth at 37 degrees Celsius as well as for maintenance of the killer plasmid. This is Protein MAK32 (MAK32) from Saccharomyces cerevisiae (strain ATCC 204508 / S288c) (Baker's yeast).